A 103-amino-acid chain; its full sequence is Large ribosomal subunit protein bL21 (103 aa).

The protein belongs to the bacterial ribosomal protein bL21 family. As to quaternary structure, part of the 50S ribosomal subunit. Contacts protein L20.

In terms of biological role, this protein binds to 23S rRNA in the presence of protein L20. This Nitrosospira multiformis (strain ATCC 25196 / NCIMB 11849 / C 71) protein is Large ribosomal subunit protein bL21.